The chain runs to 370 residues: tRNA-specific 2-thiouridylase MnmA 1 (370 aa).

ATP contacts are provided by residues 9–16 and Met-35; that span reads GMSGGVDS. An interaction with target base in tRNA region spans residues 95–97; sequence NPD. Cys-100 serves as the catalytic Nucleophile. An intrachain disulfide couples Cys-100 to Cys-196. Gly-124 provides a ligand contact to ATP. The interaction with tRNA stretch occupies residues 146–148; sequence KDQ. Residue Cys-196 is the Cysteine persulfide intermediate of the active site. Residues 306–307 are interaction with tRNA; the sequence is RY.

This sequence belongs to the MnmA/TRMU family.

The protein localises to the cytoplasm. It catalyses the reaction S-sulfanyl-L-cysteinyl-[protein] + uridine(34) in tRNA + AH2 + ATP = 2-thiouridine(34) in tRNA + L-cysteinyl-[protein] + A + AMP + diphosphate + H(+). Catalyzes the 2-thiolation of uridine at the wobble position (U34) of tRNA, leading to the formation of s(2)U34. The sequence is that of tRNA-specific 2-thiouridylase MnmA 1 from Geobacillus kaustophilus (strain HTA426).